A 185-amino-acid chain; its full sequence is Pericyclase pydY (185 aa).

Belongs to the pericyclase pydY family.

The protein operates within mycotoxin biosynthesis. Pericyclase; part of the gene cluster that mediates the biosynthesis of pyrrocidines, fungal natural products containing a macrocyclic para-cyclophane connected to a decahydrofluorene ring system that show potent antibiotic activities toward Gram-negative bacteria. Within the pathway, pydY is involved in the late Diels-Alder cycloaddition step that leads to the formation of the decahydrofluorene core. The pathway begins with the PKS-NRPS pydA which, with the help of the trans-enoyl reductase pydC, synthesizes the polyketide-tyrosyl acyl thioester product which can be reductively off-loaded by the terminal reductase (R) domain in pydA. The alpha/beta hydrolase pydG is then required to catalyze the subsequent Knoevenagel condensation that affords the 3-pyrrolin-2-one ring, whereas the four proteins pydB, pydE, pydX and pydZ then function synergistically to form the cyclophane. PydB and the membrane-bound pydX and pydZ are lipid-binding proteins that can sequester and mold the pdyG product into the inverse S-shape. Binding of the medium chain reductase pydE to the complex would trigger the cascade oxidative cyclization. PydY is involved in the Diels-Alder cycloaddition that forms the decahydrofluorene core. Additional non-enzymatic hydroxylation yields pyrrocidine A2 which can be further reduced into pyrrocidine B by an endogenous reductase. The sequence is that of Pericyclase pydY from Acremonium sp.